Reading from the N-terminus, the 94-residue chain is Large ribosomal subunit protein bL25 (94 aa).

This sequence belongs to the bacterial ribosomal protein bL25 family. Part of the 50S ribosomal subunit; part of the 5S rRNA/L5/L18/L25 subcomplex. Contacts the 5S rRNA. Binds to the 5S rRNA independently of L5 and L18.

Functionally, this is one of the proteins that binds to the 5S RNA in the ribosome where it forms part of the central protuberance. This Citrobacter koseri (strain ATCC BAA-895 / CDC 4225-83 / SGSC4696) protein is Large ribosomal subunit protein bL25.